The following is a 341-amino-acid chain: Anthranilate phosphoribosyltransferase (341 aa).

Residues Gly-84, Gly-87 to Asp-88, Thr-92, Asn-94 to Thr-97, Lys-112 to Ser-120, and Ser-124 each bind 5-phospho-alpha-D-ribose 1-diphosphate. Gly-84 lines the anthranilate pocket. Residue Ser-96 coordinates Mg(2+). Asn-115 lines the anthranilate pocket. An anthranilate-binding site is contributed by Arg-170. Residues Asp-229 and Glu-230 each contribute to the Mg(2+) site.

Belongs to the anthranilate phosphoribosyltransferase family. Homodimer. It depends on Mg(2+) as a cofactor.

It catalyses the reaction N-(5-phospho-beta-D-ribosyl)anthranilate + diphosphate = 5-phospho-alpha-D-ribose 1-diphosphate + anthranilate. The protein operates within amino-acid biosynthesis; L-tryptophan biosynthesis; L-tryptophan from chorismate: step 2/5. Functionally, catalyzes the transfer of the phosphoribosyl group of 5-phosphorylribose-1-pyrophosphate (PRPP) to anthranilate to yield N-(5'-phosphoribosyl)-anthranilate (PRA). This Polynucleobacter asymbioticus (strain DSM 18221 / CIP 109841 / QLW-P1DMWA-1) (Polynucleobacter necessarius subsp. asymbioticus) protein is Anthranilate phosphoribosyltransferase.